The sequence spans 205 residues: Lipoprotein MlpB (205 aa).

The N-terminal stretch at 1–17 (MKIINILFCLLLIVLNS) is a signal peptide. A lipid anchor (N-palmitoyl cysteine) is attached at cysteine 18. The S-diacylglycerol cysteine moiety is linked to residue cysteine 18.

It belongs to the Multicopy lipoprotein (Mlp) family.

It localises to the cell outer membrane. Functionally, an outer membrane protein that may participate in pathogenesis. Some human Lyme disease patients have antibodies against this protein. The Mlp proteins probably undergo intragenic recombination, generating new alleles. The protein is Lipoprotein MlpB of Borreliella burgdorferi (strain ATCC 35210 / DSM 4680 / CIP 102532 / B31) (Borrelia burgdorferi).